The following is a 371-amino-acid chain: MGELRGAHVPVLLERCLELLSPALDRTGQTGRTVYVDATLGLGGHAEAILTAHPRTMLVGLDRDTEALAHARVRLARFADRVHLEHAVYDELPDVLDRIGHPVVDGILFDLGVSSLQLDAPDRGFAYAQDAPLDMRMDQSRGVTAEEVVNSYSHPELARVLRVYGEEKFASRIASAIVRERDRAPITSSAQLAELVRQAIPAPARRTGGHPAKRTFQALRIEVNRELAALETALPAALDRLAIEGRMVVLSYHSLEDRLTKVALADRVRSKGPIDLPVELPGTGPTFRLLSRGAELPGEAEVAVNPRAASVRLRAAERLDPTQQQRQRTDRERYRRQVRAMHQPGTGSAVRRPVSGDDGTGTDEEGEGHDD.

S-adenosyl-L-methionine-binding positions include 43–45 (GGH), aspartate 62, leucine 96, aspartate 110, and glutamine 117. The interval 315–371 (AAERLDPTQQQRQRTDRERYRRQVRAMHQPGTGSAVRRPVSGDDGTGTDEEGEGHDD) is disordered. Acidic residues predominate over residues 360-371 (TGTDEEGEGHDD).

This sequence belongs to the methyltransferase superfamily. RsmH family.

It localises to the cytoplasm. The catalysed reaction is cytidine(1402) in 16S rRNA + S-adenosyl-L-methionine = N(4)-methylcytidine(1402) in 16S rRNA + S-adenosyl-L-homocysteine + H(+). Specifically methylates the N4 position of cytidine in position 1402 (C1402) of 16S rRNA. This chain is Ribosomal RNA small subunit methyltransferase H, found in Salinispora tropica (strain ATCC BAA-916 / DSM 44818 / JCM 13857 / NBRC 105044 / CNB-440).